A 120-amino-acid chain; its full sequence is ATP-dependent Clp protease adapter protein ClpS (120 aa).

A disordered region spans residues M1–A27.

This sequence belongs to the ClpS family. As to quaternary structure, binds to the N-terminal domain of the chaperone ClpA.

Functionally, involved in the modulation of the specificity of the ClpAP-mediated ATP-dependent protein degradation. The chain is ATP-dependent Clp protease adapter protein ClpS from Pseudomonas putida (strain GB-1).